A 315-amino-acid chain; its full sequence is COMPASS component SWD3 (315 aa).

WD repeat units follow at residues 53–93, 94–133, 136–178, 187–228, 238–278, and 285–315; these read SHAR…HTFI, GHTAPVISLTFNRKGNLLFTSSMDESIKIWDTLNGSLMKT, AHSE…KTLT, NGVV…RTFQ, HHSC…LLQL, and HHSSPVMSIHCFGNIMCSLALNGDCCLWRWV.

In terms of assembly, component of the Set1C/COMPASS complex which consists of SET1(2), BRE2(2), SPP1(2), SDC1(1), SHG1(1), SWD1(1), SWD2(1), and SWD3(1).

The protein resides in the nucleus. Its subcellular location is the chromosome. The protein localises to the telomere. In terms of biological role, the COMPASS (Set1C) complex specifically mono-, di- and trimethylates histone H3 to form H3K4me1/2/3, which subsequently plays a role in telomere length maintenance and transcription elongation regulation. COMPASS recognizes ubiquitinated H2B on one face of the nucleosome which stimulates the methylation of H3 on the opposing face. SWD3/CPS30 establishes COMPASS trimethylation activity and may also serve as the anchor point to properly tether and space the other subunits. This chain is COMPASS component SWD3, found in Saccharomyces cerevisiae (strain ATCC 204508 / S288c) (Baker's yeast).